We begin with the raw amino-acid sequence, 480 residues long: Glutathione reductase (480 aa).

S31 and G32 together coordinate FAD. S31 contacts glutathione. Position 38 (R38) interacts with glutathione. FAD-binding residues include E51, T58, C59, and K67. A disulfide bridge connects residues C59 and C64. Y121 lines the glutathione pocket. Position 137 (A137) interacts with FAD. The NADP(+) site is built by I206, E209, R226, and G291. D331 provides a ligand contact to FAD. Position 337 (E337) interacts with NADP(+). T339 contacts FAD. R347 is a binding site for glutathione. Residue V372 coordinates NADP(+). K422 is a binding site for glutathione. Position 469 (H469) interacts with FAD. H469 (proton acceptor) is an active-site residue.

The protein belongs to the class-I pyridine nucleotide-disulfide oxidoreductase family. In terms of assembly, homodimer. Requires FAD as cofactor.

The protein resides in the cytoplasm. Its subcellular location is the mitochondrion. The catalysed reaction is 2 glutathione + NADP(+) = glutathione disulfide + NADPH + H(+). In terms of biological role, catalyzes the reduction of glutathione disulfide (GSSG) to reduced glutathione (GSH). Constitutes the major mechanism to maintain a high GSH:GSSG ratio in the cytosol. In Eremothecium gossypii (strain ATCC 10895 / CBS 109.51 / FGSC 9923 / NRRL Y-1056) (Yeast), this protein is Glutathione reductase (GLR1).